The chain runs to 132 residues: MIAKTVAVLALAGSAAAYAPTMSLSANRRELVQGAAAAAVVAPLLRPTGASARDAQLRAPIVEIFDARGCDAKNAQYTGPKSNDMNDDQCVKVSMQKITVSEATAAKKLQEFIGGKATAINVPIISSMTKKY.

Residues aspartate 54 and arginine 68 each coordinate (2R,3E)-phycocyanobilin. Mesobiliverdin-binding residues include cysteine 70, glutamine 76, tyrosine 77, and lysine 92. Proline 123 and isoleucine 125 together coordinate 15,16-dihydrobiliverdin.

It belongs to the phycoerythrin family. In terms of assembly, heterotetramer of 2 different alpha chains and 2 identical beta chains which form 2 alpha-beta heterodimers within the heterotetramer. In terms of processing, contains two phycocyanobilin chromophores, one mesobiliverdin chromophore and one 15,16-dihydrobiliverdin chromophore with binding mediated by both the alpha and beta subunits.

The protein resides in the plastid. The protein localises to the chloroplast thylakoid membrane. In terms of biological role, light-harvesting photosynthetic tetrapyrrole chromophore-protein from the phycobiliprotein complex. This is Phycocyanin PC645 alpha-1 subunit from Chroomonas sp. (strain CCMP270).